The chain runs to 120 residues: Protein FAM241B (120 aa).

The interval 12–59 is disordered; that stretch reads QDDDPRVRTTTQHRSSSSQQGFFNRGHGAPPGGPGPRQQQAGARLGAA. Composition is skewed to low complexity over residues 19–39 and 47–59; these read RTTT…RGHG and PRQQ…LGAA. At Ser61 the chain carries Phosphoserine. A helical membrane pass occupies residues 91–111; that stretch reads ILLLFLLMMLGVRGLLLVGLV.

It belongs to the FAM241 family.

The protein resides in the membrane. In terms of biological role, may play a role in lysosome homeostasis. The chain is Protein FAM241B from Mus musculus (Mouse).